The chain runs to 70 residues: SWDSIWKSAKNKMDKIMRQKVAKWMAKKEGKSVEEVQAKVDAMSKKDIRMHVISHYGKKAFEQLSKSLEE.

It belongs to the cationic peptide 06 (cytoinsectotoxin) family. In terms of tissue distribution, expressed by the venom gland.

The protein resides in the secreted. Functionally, insecticidal and antimicrobial peptide. Has insecticidal activity against larvae of flesh fly S.carnaria. Has antibacterial activity against Gram-positive bacterium B.subtilis B-501 (MIC=1.25 uM) and Gram-negative bacterium E.coli DH5alpha (MIC=2.5 uM). This chain is Cytoinsectotoxin-2c, found in Lachesana tarabaevi (Spider).